A 142-amino-acid polypeptide reads, in one-letter code: Large ribosomal subunit protein uL11 (142 aa).

Belongs to the universal ribosomal protein uL11 family. As to quaternary structure, part of the ribosomal stalk of the 50S ribosomal subunit. Interacts with L10 and the large rRNA to form the base of the stalk. L10 forms an elongated spine to which L12 dimers bind in a sequential fashion forming a multimeric L10(L12)X complex. Post-translationally, one or more lysine residues are methylated.

Forms part of the ribosomal stalk which helps the ribosome interact with GTP-bound translation factors. This is Large ribosomal subunit protein uL11 from Gamma-proteobacterium EBAC31A08.